Consider the following 446-residue polypeptide: Glutamate-1-semialdehyde 2,1-aminomutase (446 aa).

An N6-(pyridoxal phosphate)lysine modification is found at lysine 264.

It belongs to the class-III pyridoxal-phosphate-dependent aminotransferase family. HemL subfamily. Pyridoxal 5'-phosphate serves as cofactor.

It localises to the cytoplasm. The catalysed reaction is (S)-4-amino-5-oxopentanoate = 5-aminolevulinate. It participates in porphyrin-containing compound metabolism; protoporphyrin-IX biosynthesis; 5-aminolevulinate from L-glutamyl-tRNA(Glu): step 2/2. The polypeptide is Glutamate-1-semialdehyde 2,1-aminomutase (Natronomonas pharaonis (strain ATCC 35678 / DSM 2160 / CIP 103997 / JCM 8858 / NBRC 14720 / NCIMB 2260 / Gabara) (Halobacterium pharaonis)).